The primary structure comprises 294 residues: Probable cobalamin biosynthesis protein CobD (294 aa).

4 helical membrane passes run 52-72 (AGLLTALVVITFAFLLSIVPF), 73-93 (YAPFPLNYFLAAYLLKSSFAI), 145-165 (DSVVAPLFYFLLFGLQGAVIY), and 268-288 (IYWLVVTGWVIVVVLLLATGV).

The protein belongs to the CobD/CbiB family.

It localises to the cell membrane. The protein operates within cofactor biosynthesis; adenosylcobalamin biosynthesis. In terms of biological role, converts cobyric acid to cobinamide by the addition of aminopropanol on the F carboxylic group. The chain is Probable cobalamin biosynthesis protein CobD from Thermococcus kodakarensis (strain ATCC BAA-918 / JCM 12380 / KOD1) (Pyrococcus kodakaraensis (strain KOD1)).